Here is a 137-residue protein sequence, read N- to C-terminus: Large ribosomal subunit protein uL16 (137 aa).

It belongs to the universal ribosomal protein uL16 family. In terms of assembly, part of the 50S ribosomal subunit.

Functionally, binds 23S rRNA and is also seen to make contacts with the A and possibly P site tRNAs. The polypeptide is Large ribosomal subunit protein uL16 (Streptococcus sanguinis (strain SK36)).